The chain runs to 298 residues: Protoheme IX farnesyltransferase (298 aa).

The next 8 helical transmembrane spans lie at 24 to 44 (VVSL…PAWP), 46 to 66 (WTTI…AAAF), 97 to 117 (LVFA…VVNP), 118 to 138 (LTMW…TVLL), 146 to 166 (IVIG…AATG), 172 to 192 (ALLL…ALAL), 231 to 251 (LLPV…VLLG), and 278 to 298 (IWYL…PIPV).

The protein belongs to the UbiA prenyltransferase family. Protoheme IX farnesyltransferase subfamily.

Its subcellular location is the cell inner membrane. It catalyses the reaction heme b + (2E,6E)-farnesyl diphosphate + H2O = Fe(II)-heme o + diphosphate. Its pathway is porphyrin-containing compound metabolism; heme O biosynthesis; heme O from protoheme: step 1/1. Converts heme B (protoheme IX) to heme O by substitution of the vinyl group on carbon 2 of heme B porphyrin ring with a hydroxyethyl farnesyl side group. This chain is Protoheme IX farnesyltransferase, found in Thiobacillus denitrificans (strain ATCC 25259 / T1).